Reading from the N-terminus, the 408-residue chain is Aminoacylase-1 (408 aa).

Zn(2+) is bound at residue His-80. Residue Asp-82 is part of the active site. Asp-113 provides a ligand contact to Zn(2+). Glu-147 acts as the Proton acceptor in catalysis. The Zn(2+) site is built by Glu-148, Glu-175, and His-373.

The protein belongs to the peptidase M20A family. As to quaternary structure, homodimer. Interacts with SPHK1. The cofactor is Zn(2+).

The protein resides in the cytoplasm. It carries out the reaction an N-acyl-L-amino acid + H2O = an L-alpha-amino acid + a carboxylate. The enzyme catalyses N-acetyl-L-methionine + H2O = L-methionine + acetate. It catalyses the reaction N-acetyl-L-glutamine + H2O = L-glutamine + acetate. Catalyzes the hydrolysis of N-acetylated amino acids to acetate and free amino acids. In Pongo abelii (Sumatran orangutan), this protein is Aminoacylase-1 (ACY1).